A 48-amino-acid chain; its full sequence is Small, acid-soluble spore protein N (48 aa).

A disordered region spans residues 1 to 48 (MMGREHDKQAQFTPDHLGTKPVAYKRNKGKKMHNKSNEQPDVIQTKGE). The span at 23–34 (AYKRNKGKKMHN) shows a compositional bias: basic residues.

This sequence belongs to the SspN family.

The protein resides in the spore core. This is Small, acid-soluble spore protein N from Bacillus pumilus (strain SAFR-032).